A 391-amino-acid polypeptide reads, in one-letter code: NAD(P)H-quinone oxidoreductase subunit H, chloroplastic (391 aa).

Belongs to the complex I 49 kDa subunit family. In terms of assembly, NDH is composed of at least 16 different subunits, 5 of which are encoded in the nucleus.

It localises to the plastid. The protein resides in the chloroplast thylakoid membrane. The enzyme catalyses a plastoquinone + NADH + (n+1) H(+)(in) = a plastoquinol + NAD(+) + n H(+)(out). The catalysed reaction is a plastoquinone + NADPH + (n+1) H(+)(in) = a plastoquinol + NADP(+) + n H(+)(out). Its function is as follows. NDH shuttles electrons from NAD(P)H:plastoquinone, via FMN and iron-sulfur (Fe-S) centers, to quinones in the photosynthetic chain and possibly in a chloroplast respiratory chain. The immediate electron acceptor for the enzyme in this species is believed to be plastoquinone. Couples the redox reaction to proton translocation, and thus conserves the redox energy in a proton gradient. This is NAD(P)H-quinone oxidoreductase subunit H, chloroplastic from Mesostigma viride (Green alga).